A 593-amino-acid chain; its full sequence is V-type ATP synthase alpha chain (593 aa).

ATP is bound at residue 246–253; it reads GPFGAGKT.

This sequence belongs to the ATPase alpha/beta chains family.

It catalyses the reaction ATP + H2O + 4 H(+)(in) = ADP + phosphate + 5 H(+)(out). Its function is as follows. Produces ATP from ADP in the presence of a proton gradient across the membrane. The V-type alpha chain is a catalytic subunit. This Protochlamydia amoebophila (strain UWE25) protein is V-type ATP synthase alpha chain.